The sequence spans 450 residues: MHDVWRQATENLEKVMSESDFTTWIQPISYSHADDTTVFLTVPTLFFKEWIDEHYRQVLVGALSVTAGKKYFIELVVQEEDQNAEVPQAEDLIIKGHQEIEQPVTSQPETSSSSLNPKYTFELFVSGTGNQFAHAAAMAVANNPADTYNPLFIYGGVGLGKSHLLNAIGHTIRSSSPNLSVCYCSAEKFMYEMVNALRQKRMDQFRSRFRNLDVLLVDDIQFISGKVGTQEEFFHTFNALYDMQKQIVITSDKFPREISDLEERLRSRFEWGLIADIQPPDLETKIAILKKKSEITRIQLPEDVIYFLASSDTRNIRELEGMLIRLGAYSSLQGIPITLDMARENLKEIIGDRRKDITVELIQKVVAEQFGLKMADLKSSKRLKNFVQARQIAIWLCRDMTSFSYPDIGAKFGGKDHSTVIYAAKKIDLALKDDPKLSRIIEDIKLILLK.

The tract at residues 1 to 69 (MHDVWRQATE…VGALSVTAGK (69 aa)) is domain I, interacts with DnaA modulators. The tract at residues 69–113 (KKYFIELVVQEEDQNAEVPQAEDLIIKGHQEIEQPVTSQPETSSS) is domain II. A domain III, AAA+ region region spans residues 114–330 (SLNPKYTFEL…GMLIRLGAYS (217 aa)). ATP contacts are provided by Gly158, Gly160, Lys161, and Ser162. Residues 331–450 (SLQGIPITLD…IEDIKLILLK (120 aa)) form a domain IV, binds dsDNA region.

Belongs to the DnaA family. Oligomerizes as a right-handed, spiral filament on DNA at oriC.

The protein localises to the cytoplasm. In terms of biological role, plays an essential role in the initiation and regulation of chromosomal replication. ATP-DnaA binds to the origin of replication (oriC) to initiate formation of the DNA replication initiation complex once per cell cycle. Binds the DnaA box (a 9 base pair repeat at the origin) and separates the double-stranded (ds)DNA. Forms a right-handed helical filament on oriC DNA; dsDNA binds to the exterior of the filament while single-stranded (ss)DNA is stabiized in the filament's interior. The ATP-DnaA-oriC complex binds and stabilizes one strand of the AT-rich DNA unwinding element (DUE), permitting loading of DNA polymerase. After initiation quickly degrades to an ADP-DnaA complex that is not apt for DNA replication. Binds acidic phospholipids. The protein is Chromosomal replication initiator protein DnaA of Pelobacter propionicus (strain DSM 2379 / NBRC 103807 / OttBd1).